Here is a 501-residue protein sequence, read N- to C-terminus: Aspartate--tRNA ligase, cytoplasmic (501 aa).

The residue at position 52 (T52) is a Phosphothreonine. N6-acetyllysine is present on K74. E229 is an L-aspartate binding site. S249 bears the Phosphoserine mark. Residues 251–254 (QLYK) are aspartate. Residue R273 coordinates L-aspartate. ATP is bound by residues 273-275 (RAE) and 281-283 (RHL). Position 374 is an N6-acetyllysine (K374). Residues 411–415 (KQSNS) form a binding site for the 3'-end of tRNA region. E424 lines the ATP pocket. L-aspartate-binding residues include S427 and R431. 472-475 (GLER) provides a ligand contact to ATP. T500 carries the post-translational modification Phosphothreonine; by PKA.

It belongs to the class-II aminoacyl-tRNA synthetase family. Type 2 subfamily. As to quaternary structure, homodimer. Part of a multisubunit complex that groups tRNA ligases for Arg (RARS1), Asp (DARS1), Gln (QARS1), Ile (IARS1), Leu (LARS1), Lys (KARS1), Met (MARS1) the bifunctional ligase for Glu and Pro (EPRS1) and the auxiliary subunits AIMP1/p43, AIMP2/p38 and EEF1E1/p18.

The protein localises to the cytoplasm. It carries out the reaction tRNA(Asp) + L-aspartate + ATP = L-aspartyl-tRNA(Asp) + AMP + diphosphate. In terms of biological role, catalyzes the specific attachment of an amino acid to its cognate tRNA in a 2 step reaction: the amino acid (AA) is first activated by ATP to form AA-AMP and then transferred to the acceptor end of the tRNA. The protein is Aspartate--tRNA ligase, cytoplasmic (DARS1) of Bos taurus (Bovine).